Reading from the N-terminus, the 129-residue chain is Fluoride-specific ion channel FluC 2 (129 aa).

The next 4 helical transmembrane spans lie at 3-23 (FLYV…MNLW), 32-52 (ATLA…PFLA), 59-79 (LVLL…FSAF), and 90-110 (GEVV…LVMV). Residues glycine 71 and threonine 74 each contribute to the Na(+) site.

It belongs to the fluoride channel Fluc/FEX (TC 1.A.43) family.

It is found in the cell membrane. The enzyme catalyses fluoride(in) = fluoride(out). With respect to regulation, na(+) is not transported, but it plays an essential structural role and its presence is essential for fluoride channel function. In terms of biological role, fluoride-specific ion channel. Important for reducing fluoride concentration in the cell, thus reducing its toxicity. This Listeria innocua serovar 6a (strain ATCC BAA-680 / CLIP 11262) protein is Fluoride-specific ion channel FluC 2.